The chain runs to 233 residues: Lactate utilization protein C (233 aa).

Belongs to the LutC/YkgG family.

In terms of biological role, is involved in L-lactate degradation and allows cells to grow with lactate as the sole carbon source. This Oceanobacillus iheyensis (strain DSM 14371 / CIP 107618 / JCM 11309 / KCTC 3954 / HTE831) protein is Lactate utilization protein C.